Reading from the N-terminus, the 2617-residue chain is DNA-directed RNA polymerase subunit beta'' (2617 aa).

Zn(2+) contacts are provided by cysteine 263, cysteine 334, cysteine 341, and cysteine 344.

This sequence belongs to the RNA polymerase beta' chain family. RpoC2 subfamily. In terms of assembly, in plastids the minimal PEP RNA polymerase catalytic core is composed of four subunits: alpha, beta, beta', and beta''. When a (nuclear-encoded) sigma factor is associated with the core the holoenzyme is formed, which can initiate transcription. Zn(2+) is required as a cofactor.

The protein resides in the plastid. Its subcellular location is the chloroplast. The enzyme catalyses RNA(n) + a ribonucleoside 5'-triphosphate = RNA(n+1) + diphosphate. In terms of biological role, DNA-dependent RNA polymerase catalyzes the transcription of DNA into RNA using the four ribonucleoside triphosphates as substrates. This chain is DNA-directed RNA polymerase subunit beta'', found in Oedogonium cardiacum (Filamentous green alga).